The chain runs to 76 residues: Histone acetyltransferase (76 aa).

In terms of assembly, physically interacts with histone H3 in infected macrophages.

It is found in the secreted. It localises to the host cytoplasm. The protein localises to the host nucleus. The catalysed reaction is L-lysyl-[protein] + acetyl-CoA = N(6)-acetyl-L-lysyl-[protein] + CoA + H(+). Is completely inhibited by anacardic acid, an inhibitor of HAT activity. Histone acetyltransferase, which by binding to the host chromatin, may manipulate the expression of host genes involved in anti-inflammatory responses to evade clearance and to survive in the intracellular milieu. Acetylates histone H3 at the 'Lys-9' and 'Lys-14' positions. The chain is Histone acetyltransferase from Mycobacterium tuberculosis (strain CDC 1551 / Oshkosh).